We begin with the raw amino-acid sequence, 792 residues long: 5-methyltetrahydropteroyltriglutamate--homocysteine methyltransferase (792 aa).

5-methyltetrahydropteroyltri-L-glutamate contacts are provided by residues 16–19 and Lys-112; that span reads RELK. L-homocysteine contacts are provided by residues 432 to 434 and Glu-485; that span reads IGS. Residues 432-434 and Glu-485 each bind L-methionine; that span reads IGS. 5-methyltetrahydropteroyltri-L-glutamate contacts are provided by residues 516–517 and Trp-562; that span reads RC. Residue Asp-600 participates in L-homocysteine binding. Asp-600 provides a ligand contact to L-methionine. Glu-606 provides a ligand contact to 5-methyltetrahydropteroyltri-L-glutamate. Residues His-642, Cys-644, and Glu-666 each contribute to the Zn(2+) site. The active-site Proton donor is His-695. Position 727 (Cys-727) interacts with Zn(2+).

The protein belongs to the vitamin-B12 independent methionine synthase family. The cofactor is Zn(2+).

The enzyme catalyses 5-methyltetrahydropteroyltri-L-glutamate + L-homocysteine = tetrahydropteroyltri-L-glutamate + L-methionine. Its pathway is amino-acid biosynthesis; L-methionine biosynthesis via de novo pathway; L-methionine from L-homocysteine (MetE route): step 1/1. Its function is as follows. Catalyzes the transfer of a methyl group from 5-methyltetrahydrofolate to homocysteine resulting in methionine formation. The sequence is that of 5-methyltetrahydropteroyltriglutamate--homocysteine methyltransferase from Cupriavidus necator (Alcaligenes eutrophus).